We begin with the raw amino-acid sequence, 449 residues long: Exodeoxyribonuclease 7 large subunit (449 aa).

The protein belongs to the XseA family. Heterooligomer composed of large and small subunits.

It is found in the cytoplasm. The catalysed reaction is Exonucleolytic cleavage in either 5'- to 3'- or 3'- to 5'-direction to yield nucleoside 5'-phosphates.. Bidirectionally degrades single-stranded DNA into large acid-insoluble oligonucleotides, which are then degraded further into small acid-soluble oligonucleotides. The polypeptide is Exodeoxyribonuclease 7 large subunit (Lacticaseibacillus paracasei (strain ATCC 334 / BCRC 17002 / CCUG 31169 / CIP 107868 / KCTC 3260 / NRRL B-441) (Lactobacillus paracasei)).